We begin with the raw amino-acid sequence, 138 residues long: MRTLWIMAVLLVGVEGHLMQFETLIMKVAGRSGVWYYGSYGCFCGAGGQGRPQDASDRCCFVHDCCYGKVNGCDPKKDFYTYSEENGAIVCGGDDPCKKEICECDKDAAICFRDNKDTYDNKYWFFPAKNCQEESEPC.

Positions 1-16 are cleaved as a signal peptide; it reads MRTLWIMAVLLVGVEG. Disulfide bonds link cysteine 42-cysteine 131, cysteine 44-cysteine 60, cysteine 59-cysteine 111, cysteine 65-cysteine 138, cysteine 66-cysteine 104, cysteine 73-cysteine 97, and cysteine 91-cysteine 102. Residues phenylalanine 43, glycine 45, and glycine 47 each coordinate Ca(2+). Residue histidine 63 is part of the active site. Residue aspartate 64 coordinates Ca(2+). Aspartate 105 is a catalytic residue.

The protein belongs to the phospholipase A2 family. Group II subfamily. D49 sub-subfamily. Ca(2+) is required as a cofactor. Expressed by the venom gland.

Its subcellular location is the secreted. The enzyme catalyses a 1,2-diacyl-sn-glycero-3-phosphocholine + H2O = a 1-acyl-sn-glycero-3-phosphocholine + a fatty acid + H(+). In terms of biological role, snake venom phospholipase A2 (PLA2) that has high lipolytic activity. PLA2 catalyzes the calcium-dependent hydrolysis of the 2-acyl groups in 3-sn-phosphoglycerides. This chain is Acidic phospholipase A2 1, found in Craspedocephalus gramineus (Bamboo pit viper).